An 84-amino-acid chain; its full sequence is Mitochondrial import inner membrane translocase subunit Tim9 (84 aa).

The Twin CX3C motif motif lies at 28–52 (CFMDCVKDFTTREVKPEETTCSESC). Intrachain disulfides connect cysteine 28–cysteine 52 and cysteine 32–cysteine 48.

Belongs to the small Tim family. In terms of assembly, heterohexamer; composed of 3 copies of TIMM9 and 3 copies of TIMM10/TIM10A, named soluble 70 kDa complex. The complex forms a 6-bladed alpha-propeller structure and associates with the TIMM22 component of the TIM22 complex. Interacts with multi-pass transmembrane proteins in transit.

The protein localises to the mitochondrion inner membrane. In terms of biological role, mitochondrial intermembrane chaperone that participates in the import and insertion of multi-pass transmembrane proteins into the mitochondrial inner membrane. May also be required for the transfer of beta-barrel precursors from the TOM complex to the sorting and assembly machinery (SAM complex) of the outer membrane. Acts as a chaperone-like protein that protects the hydrophobic precursors from aggregation and guide them through the mitochondrial intermembrane space. The protein is Mitochondrial import inner membrane translocase subunit Tim9 (timm9) of Danio rerio (Zebrafish).